The following is a 249-amino-acid chain: Small ribosomal subunit protein uS3 (249 aa).

Residues 39–109 enclose the KH type-2 domain; sequence IRTYVLARLK…EVKIDVVEVV (71 aa). Over residues 226–239 the composition is skewed to basic and acidic residues; it reads KERRNDAGARNRDS. Residues 226 to 249 form a disordered region; the sequence is KERRNDAGARNRDSRTKRRHRTKR. Positions 240–249 are enriched in basic residues; that stretch reads RTKRRHRTKR.

It belongs to the universal ribosomal protein uS3 family. In terms of assembly, part of the 30S ribosomal subunit. Forms a tight complex with proteins S10 and S14.

Functionally, binds the lower part of the 30S subunit head. Binds mRNA in the 70S ribosome, positioning it for translation. The polypeptide is Small ribosomal subunit protein uS3 (Pelodictyon phaeoclathratiforme (strain DSM 5477 / BU-1)).